A 224-amino-acid polypeptide reads, in one-letter code: Trans-acting factor B (224 aa).

Its function is as follows. Plasmid partition require REP1, REP2, and a cis-acting DNA sequence (known as STB). REP1 may act by intercalating in the yeast nuclear matrix and binding STB either directly or via REP2. The protein is Trans-acting factor B (B) of Lachancea fermentati (Zygosaccharomyces fermentati).